Reading from the N-terminus, the 64-residue chain is Large ribosomal subunit protein uL30 (64 aa).

The protein belongs to the universal ribosomal protein uL30 family. Part of the 50S ribosomal subunit.

In Beijerinckia indica subsp. indica (strain ATCC 9039 / DSM 1715 / NCIMB 8712), this protein is Large ribosomal subunit protein uL30.